A 62-amino-acid polypeptide reads, in one-letter code: UPF0434 protein azo1471 (62 aa).

This sequence belongs to the UPF0434 family.

The chain is UPF0434 protein azo1471 from Azoarcus sp. (strain BH72).